Here is a 768-residue protein sequence, read N- to C-terminus: Endoplasmin homolog (768 aa).

A signal peptide spans 1-28; it reads MKSITKIFLILGLFAFLLVAFAPSSSVA. Positions 83, 127, 140, and 173 each coordinate ATP. N-linked (GlcNAc...) asparagine glycosylation is present at Asn-83. Residues 266–276 show a composition bias toward basic and acidic residues; it reads KEEQEDSKPIT. A disordered region spans residues 266-308; sequence KEEQEDSKPITDDQVEETTTTTEEGEEETTTEEEGQTEEKKTK. Residues 288 to 301 show a composition bias toward acidic residues; the sequence is EEGEEETTTEEEGQ. Asn-317 and Asn-423 each carry an N-linked (GlcNAc...) asparagine glycan. Polar residues predominate over residues 733 to 743; it reads ETTKNENSGPS. The disordered stretch occupies residues 733–768; the sequence is ETTKNENSGPSVSFGDDDENQQQDFQQPPQSTHDEL. Residues 765-768 carry the Prevents secretion from ER motif; it reads HDEL.

Belongs to the heat shock protein 90 family. Post-translationally, phosphorylated.

It is found in the endoplasmic reticulum. The protein localises to the golgi apparatus. In terms of biological role, may play a role in late differentiation as well as in starvation response. When overexpressed, suppresses the ability to form normal fruiting bodies and impairs prespore differentiation as well as maturation into spores. The chain is Endoplasmin homolog (grp94) from Dictyostelium discoideum (Social amoeba).